Here is a 466-residue protein sequence, read N- to C-terminus: Light-independent protochlorophyllide reductase subunit N (466 aa).

3 residues coordinate [4Fe-4S] cluster: C23, C48, and C108.

The protein belongs to the BchN/ChlN family. Protochlorophyllide reductase is composed of three subunits; ChlL, ChlN and ChlB. Forms a heterotetramer of two ChlB and two ChlN subunits. [4Fe-4S] cluster is required as a cofactor.

The enzyme catalyses chlorophyllide a + oxidized 2[4Fe-4S]-[ferredoxin] + 2 ADP + 2 phosphate = protochlorophyllide a + reduced 2[4Fe-4S]-[ferredoxin] + 2 ATP + 2 H2O. The protein operates within porphyrin-containing compound metabolism; chlorophyll biosynthesis (light-independent). Its function is as follows. Component of the dark-operative protochlorophyllide reductase (DPOR) that uses Mg-ATP and reduced ferredoxin to reduce ring D of protochlorophyllide (Pchlide) to form chlorophyllide a (Chlide). This reaction is light-independent. The NB-protein (ChlN-ChlB) is the catalytic component of the complex. This chain is Light-independent protochlorophyllide reductase subunit N, found in Synechococcus elongatus (strain ATCC 33912 / PCC 7942 / FACHB-805) (Anacystis nidulans R2).